A 123-amino-acid polypeptide reads, in one-letter code: Small ribosomal subunit protein uS12c (123 aa).

Belongs to the universal ribosomal protein uS12 family. In terms of assembly, part of the 30S ribosomal subunit.

The protein localises to the plastid. Its subcellular location is the chloroplast. With S4 and S5 plays an important role in translational accuracy. Located at the interface of the 30S and 50S subunits. This Physcomitrium patens (Spreading-leaved earth moss) protein is Small ribosomal subunit protein uS12c (rps12).